Here is a 622-residue protein sequence, read N- to C-terminus: MLNALTEKRTRGSMLWDYLTTVDHKKIAILYLVAGGFFFLVGGIEAMFIRIQLAKPENAFLSAQAYNEVMTMHGTTMIFLAAMPLLFALMNAVVPLQIGARDVSFPFLNALGFWLFFFGGIFLNLSWFLGGAPDAGWTSYASLSLHSKGHGIDFFVLGLQISGLGTLIAGINFLATIINMRAPGMTYMRLPLFTWTTFVASALILFAFPPLTVGLALMMLDRLFGTNFFNPELGGNTVIWEHLFWIFGHPEVYILILPAFGIFSEVIPVFARKRLFGYSSMVFAIVLIGFLGFMVWVHHMFTTGLGPIANAIFAVATMAIAIPTGIKIFNWLLTIWGGNVKYTTAMLYAVSFIPSFVLGGVTGVMLAAAAADYQFHDTYFVVAHFHYVIIGGVVFGLLAGVHFWWPKMFGKILHETMGKISFVLFFIGFHLTFFIQHFVGLMGMPRRVYTFLPGQGLETGNLISTIGAFFMAAAVILLLVNVIWTSVKGEYVGADPWHDGRTLEWTVSSPPPEYNFKQLPFVRGLDPLWIEKQAGHKSMTPAEPVDDIHMPNGSILPLIISFGLFVAAFGLLYRSDYAWGLPVIFIGLGITFITMLLRSVIDDHGYHIHKEELPNDDKGVKA.

At 1 to 27 the chain is on the extracellular side; that stretch reads MLNALTEKRTRGSMLWDYLTTVDHKKI. The chain crosses the membrane as a helical span at residues 28–46; the sequence is AILYLVAGGFFFLVGGIEA. At 47 to 68 the chain is on the cytoplasmic side; that stretch reads MFIRIQLAKPENAFLSAQAYNE. A helical transmembrane segment spans residues 69-88; that stretch reads VMTMHGTTMIFLAAMPLLFA. Histidine 73 lines the Fe(II)-heme a pocket. Residues 89–110 are Extracellular-facing; that stretch reads LMNAVVPLQIGARDVSFPFLNA. Residues 111–128 form a helical membrane-spanning segment; it reads LGFWLFFFGGIFLNLSWF. The Cytoplasmic portion of the chain corresponds to 129 to 159; it reads LGGAPDAGWTSYASLSLHSKGHGIDFFVLGL. A helical membrane pass occupies residues 160-178; that stretch reads QISGLGTLIAGINFLATII. At 179–196 the chain is on the extracellular side; that stretch reads NMRAPGMTYMRLPLFTWT. Residues 197-215 form a helical membrane-spanning segment; the sequence is TFVASALILFAFPPLTVGL. Over 216-241 the chain is Cytoplasmic; the sequence is ALMMLDRLFGTNFFNPELGGNTVIWE. The chain crosses the membrane as a helical span at residues 242 to 261; the sequence is HLFWIFGHPEVYILILPAFG. 2 residues coordinate Cu cation: histidine 249 and tyrosine 253. Residues 249–253 constitute a cross-link (1'-histidyl-3'-tyrosine (His-Tyr)); the sequence is HPEVY. Residues 262 to 284 are Extracellular-facing; the sequence is IFSEVIPVFARKRLFGYSSMVFA. Residues 285 to 304 form a helical membrane-spanning segment; it reads IVLIGFLGFMVWVHHMFTTG. Histidine 298 and histidine 299 together coordinate Cu cation. Topologically, residues 305–312 are cytoplasmic; sequence LGPIANAI. Residues 313 to 331 traverse the membrane as a helical segment; the sequence is FAVATMAIAIPTGIKIFNW. Topologically, residues 332-346 are extracellular; the sequence is LLTIWGGNVKYTTAM. The chain crosses the membrane as a helical span at residues 347 to 366; it reads LYAVSFIPSFVLGGVTGVML. Over 367 to 374 the chain is Cytoplasmic; it reads AAAAADYQ. The chain crosses the membrane as a helical span at residues 375 to 394; that stretch reads FHDTYFVVAHFHYVIIGGVV. Histidine 384 contributes to the heme a3 binding site. A Fe(II)-heme a-binding site is contributed by histidine 386. The Extracellular portion of the chain corresponds to 395 to 421; the sequence is FGLLAGVHFWWPKMFGKILHETMGKIS. The helical transmembrane segment at 422–441 threads the bilayer; sequence FVLFFIGFHLTFFIQHFVGL. Residues 442 to 459 are Cytoplasmic-facing; that stretch reads MGMPRRVYTFLPGQGLET. A helical membrane pass occupies residues 460-479; that stretch reads GNLISTIGAFFMAAAVILLL. Over 480–552 the chain is Extracellular; the sequence is VNVIWTSVKG…EPVDDIHMPN (73 aa). The chain crosses the membrane as a helical span at residues 553–572; that stretch reads GSILPLIISFGLFVAAFGLL. At 573–580 the chain is on the cytoplasmic side; the sequence is YRSDYAWG. Residues 581 to 604 traverse the membrane as a helical segment; it reads LPVIFIGLGITFITMLLRSVIDDH. Over 605–622 the chain is Cytoplasmic; that stretch reads GYHIHKEELPNDDKGVKA.

The protein belongs to the heme-copper respiratory oxidase family. Requires Cu(2+) as cofactor. Heme serves as cofactor.

It is found in the cell membrane. The enzyme catalyses 4 Fe(II)-[cytochrome c] + O2 + 8 H(+)(in) = 4 Fe(III)-[cytochrome c] + 2 H2O + 4 H(+)(out). It functions in the pathway energy metabolism; oxidative phosphorylation. Functionally, cytochrome c oxidase is the component of the respiratory chain that catalyzes the reduction of oxygen to water. Subunits 1-3 form the functional core of the enzyme complex. Co I is the catalytic subunit of the enzyme. Electrons originating in cytochrome c are transferred via the copper A center of subunit 2 and heme a of subunit 1 to the bimetallic center formed by heme a3 and copper B. This cytochrome c oxidase shows proton pump activity across the membrane in addition to the electron transfer. The polypeptide is Cytochrome c oxidase subunit 1 (ctaD) (Bacillus subtilis (strain 168)).